An 810-amino-acid polypeptide reads, in one-letter code: Protein kinase C-binding protein NELL1 (810 aa).

An N-terminal signal peptide occupies residues 1–21 (MPMDVILVLWFCVCTARTVLG). 6 N-linked (GlcNAc...) asparagine glycosylation sites follow: asparagine 40, asparagine 53, asparagine 83, asparagine 224, asparagine 294, and asparagine 372. The Laminin G-like domain maps to 57–227 (AFLFQDVQRE…TQCPNLNRTC (171 aa)). The VWFC 1 domain maps to 271 to 332 (KTCQVSGLLY…ISGQCCKVCR (62 aa)). Disulfide bonds link cysteine 395-cysteine 407, cysteine 401-cysteine 416, and cysteine 418-cysteine 432. The Ca(2+) site is built by aspartate 434, isoleucine 435, and glutamate 437. Residues 434 to 475 (DIDECAAKMHYCHANTVCVNLPGLYRCDCIPGYIRVDDFSCT) enclose the EGF-like 1; calcium-binding domain. 15 disulfides stabilise this stretch: cysteine 438–cysteine 451, cysteine 445–cysteine 460, cysteine 462–cysteine 474, cysteine 480–cysteine 493, cysteine 487–cysteine 502, cysteine 504–cysteine 515, cysteine 519–cysteine 529, cysteine 523–cysteine 535, cysteine 537–cysteine 546, cysteine 553–cysteine 566, cysteine 560–cysteine 575, cysteine 577–cysteine 594, cysteine 600–cysteine 613, cysteine 607–cysteine 622, and cysteine 624–cysteine 630. Residues asparagine 453, leucine 454, and leucine 457 each coordinate Ca(2+). One can recognise an EGF-like 2; calcium-binding domain in the interval 476 to 516 (EHDDCGSGQHNCDKNAICTNTVQGHSCTCQPGYVGNGTVCK). Residue asparagine 511 is glycosylated (N-linked (GlcNAc...) asparagine). Positions 517 to 547 (AFCEEGCRYGGTCVAPNKCVCPSGFTGSHCE) constitute an EGF-like 3 domain. The region spanning 549–587 (DIDECAEGFVECHNHSRCVNLPGWYHCECRSGFHDDGTY) is the EGF-like 4; calcium-binding domain. N-linked (GlcNAc...) asparagine glycosylation is present at asparagine 562. The 36-residue stretch at 596 to 631 (DIDECALRTHTCWNDSACINLAGGFDCLCPSGPSCS) folds into the EGF-like 5; calcium-binding domain. N-linked (GlcNAc...) asparagine glycosylation is present at asparagine 609. VWFC domains are found at residues 632–687 (GDCP…PECD) and 692–750 (SQCL…PRCV). Asparagine 708 carries N-linked (GlcNAc...) asparagine glycosylation.

Homotrimer. Binds to PKC beta-1. Interacts with ATRAID; the interaction promotes osteoblast cell differentiation and mineralization. Interacts with ROBO3.

It localises to the cytoplasm. The protein resides in the nucleus envelope. Its subcellular location is the secreted. Functionally, plays a role in the control of cell growth and differentiation. Promotes osteoblast cell differentiation and terminal mineralization. This is Protein kinase C-binding protein NELL1 (Nell1) from Mus musculus (Mouse).